A 235-amino-acid chain; its full sequence is dITP/XTP pyrophosphatase (235 aa).

7–12 (STNPGK) contacts substrate. Catalysis depends on Asp70, which acts as the Proton acceptor. Residue Asp70 coordinates Mg(2+). Residues Ser71, 180 to 183 (FGYD), Lys211, and 216 to 217 (HR) each bind substrate.

This sequence belongs to the HAM1 NTPase family. As to quaternary structure, homodimer. Mg(2+) serves as cofactor.

It carries out the reaction XTP + H2O = XMP + diphosphate + H(+). The catalysed reaction is dITP + H2O = dIMP + diphosphate + H(+). The enzyme catalyses ITP + H2O = IMP + diphosphate + H(+). Pyrophosphatase that catalyzes the hydrolysis of nucleoside triphosphates to their monophosphate derivatives, with a high preference for the non-canonical purine nucleotides XTP (xanthosine triphosphate), dITP (deoxyinosine triphosphate) and ITP. Seems to function as a house-cleaning enzyme that removes non-canonical purine nucleotides from the nucleotide pool, thus preventing their incorporation into DNA/RNA and avoiding chromosomal lesions. This chain is dITP/XTP pyrophosphatase, found in Anaeromyxobacter dehalogenans (strain 2CP-C).